Here is a 347-residue protein sequence, read N- to C-terminus: Holliday junction branch migration complex subunit RuvB (347 aa).

The tract at residues 1 to 186 is large ATPase domain (RuvB-L); that stretch reads MKDENSINFL…FGITARFELY (186 aa). ATP is bound by residues Leu25, Arg26, Gly67, Lys70, Thr71, Thr72, 133 to 135, Arg176, Tyr186, and Arg223; that span reads EDY. Thr71 contributes to the Mg(2+) binding site. The small ATPAse domain (RuvB-S) stretch occupies residues 187–257; the sequence is SEIELVEIIK…IVAIGLEMLR (71 aa). The head domain (RuvB-H) stretch occupies residues 260–347; sequence GEGLDEQDRN…NLNENQRVSF (88 aa). DNA is bound by residues Arg315 and Arg320.

Belongs to the RuvB family. As to quaternary structure, homohexamer. Forms an RuvA(8)-RuvB(12)-Holliday junction (HJ) complex. HJ DNA is sandwiched between 2 RuvA tetramers; dsDNA enters through RuvA and exits via RuvB. An RuvB hexamer assembles on each DNA strand where it exits the tetramer. Each RuvB hexamer is contacted by two RuvA subunits (via domain III) on 2 adjacent RuvB subunits; this complex drives branch migration. In the full resolvosome a probable DNA-RuvA(4)-RuvB(12)-RuvC(2) complex forms which resolves the HJ.

It is found in the cytoplasm. The enzyme catalyses ATP + H2O = ADP + phosphate + H(+). Functionally, the RuvA-RuvB-RuvC complex processes Holliday junction (HJ) DNA during genetic recombination and DNA repair, while the RuvA-RuvB complex plays an important role in the rescue of blocked DNA replication forks via replication fork reversal (RFR). RuvA specifically binds to HJ cruciform DNA, conferring on it an open structure. The RuvB hexamer acts as an ATP-dependent pump, pulling dsDNA into and through the RuvAB complex. RuvB forms 2 homohexamers on either side of HJ DNA bound by 1 or 2 RuvA tetramers; 4 subunits per hexamer contact DNA at a time. Coordinated motions by a converter formed by DNA-disengaged RuvB subunits stimulates ATP hydrolysis and nucleotide exchange. Immobilization of the converter enables RuvB to convert the ATP-contained energy into a lever motion, pulling 2 nucleotides of DNA out of the RuvA tetramer per ATP hydrolyzed, thus driving DNA branch migration. The RuvB motors rotate together with the DNA substrate, which together with the progressing nucleotide cycle form the mechanistic basis for DNA recombination by continuous HJ branch migration. Branch migration allows RuvC to scan DNA until it finds its consensus sequence, where it cleaves and resolves cruciform DNA. In Borreliella afzelii (strain PKo) (Borrelia afzelii), this protein is Holliday junction branch migration complex subunit RuvB.